The following is a 250-amino-acid chain: 2,3-bisphosphoglycerate-dependent phosphoglycerate mutase (250 aa).

Substrate-binding positions include 8-15 (RHGESQWN), 21-22 (TG), R60, 87-90 (ERHY), K98, 114-115 (RR), and 183-184 (GN). The active-site Tele-phosphohistidine intermediate is H9. The active-site Proton donor/acceptor is the E87.

Belongs to the phosphoglycerate mutase family. BPG-dependent PGAM subfamily. As to quaternary structure, homodimer.

The enzyme catalyses (2R)-2-phosphoglycerate = (2R)-3-phosphoglycerate. The protein operates within carbohydrate degradation; glycolysis; pyruvate from D-glyceraldehyde 3-phosphate: step 3/5. Catalyzes the interconversion of 2-phosphoglycerate and 3-phosphoglycerate. The sequence is that of 2,3-bisphosphoglycerate-dependent phosphoglycerate mutase from Bordetella petrii (strain ATCC BAA-461 / DSM 12804 / CCUG 43448).